Reading from the N-terminus, the 222-residue chain is Pectate lyase A (222 aa).

The first 25 residues, 1–25, serve as a signal peptide directing secretion; it reads MKKMLTLLLSAGLVASIFGVMPAAA.

It belongs to the polysaccharide lyase 3 family. It depends on Ca(2+) as a cofactor.

Its subcellular location is the secreted. It catalyses the reaction Eliminative cleavage of (1-&gt;4)-alpha-D-galacturonan to give oligosaccharides with 4-deoxy-alpha-D-galact-4-enuronosyl groups at their non-reducing ends.. The enzyme catalyses Eliminative cleavage of (1-&gt;4)-alpha-D-galacturonan methyl ester to give oligosaccharides with 4-deoxy-6-O-methyl-alpha-D-galact-4-enuronosyl groups at their non-reducing ends.. It participates in glycan metabolism; pectin degradation; 2-dehydro-3-deoxy-D-gluconate from pectin: step 2/5. With respect to regulation, strongly inhibited by Ba(2+). To a lesser extent, is also inhibited by Sn(2+), Mg(2+) and Ag(+). Inhibited by EDTA in vitro. Its function is as follows. Catalyzes the depolymerization of both polygalacturonate and pectins of methyl esterification degree from 22 to 89%, with an endo mode of action. In contrast to the majority of pectate lyases, displays high activity on highly methylated pectins. Is not able to cleave trigalacturonate. Does not degrade xylans and carboxymethylcellulose (CMC). The chain is Pectate lyase A (pelA) from Paenibacillus barcinonensis.